Here is a 272-residue protein sequence, read N- to C-terminus: Replication-associated protein A (272 aa).

One can recognise a CRESS-DNA virus Rep endonuclease domain in the interval 11-114 (SHRSPNTFLT…PLALFERGTF (104 aa)). An RCR-1 motif is present at residues 18 to 21 (FLTY). A divalent metal cation is bound by residues glutamate 52 and histidine 62. Residues 60–65 (CLHALI) carry the RCR-2 motif. Catalysis depends on tyrosine 100, which acts as the For DNA cleavage activity. The short motif at 100-103 (YITK) is the RCR-3 element. Glutamate 104 lines the a divalent metal cation pocket. The segment at 175-187 (SANKLFPDIQEEF) is oligomerization. The LXCXE motif, interaction with host RBR1 motif lies at 198–202 (LLCNE). A transactivation region spans residues 221 to 230 (LLLQPNCYSI). Over residues 251-265 (QGSAASTSSVQQGQE) the composition is skewed to polar residues. A disordered region spans residues 251 to 272 (QGSAASTSSVQQGQENLHGPEA).

This sequence belongs to the geminiviridae Rep protein family. Homooligomer. Interacts (via LXCXE domain) with host retinoblastoma-related protein 1 (RBR1), and may thereby deregulate the host cell cycle. Part of the C- and V-complexes which are RepA-Rep-DNA complexes involved in the c-sense and v-sense transcription.

It localises to the host nucleus. It is found in the host cytoplasm. In terms of biological role, implicated in enhancement of V-sense gene expression. Acts a an inhibitor of C-sense gene transcription. In Avena sativa (Oat), this protein is Replication-associated protein A.